The following is a 428-amino-acid chain: Cysteine--tRNA ligase (428 aa).

Cys-23 is a Zn(2+) binding site. Positions 25–35 (PTVYNDLHLGN) match the 'HIGH' region motif. Zn(2+)-binding residues include Cys-196, His-221, and Glu-225. The short motif at 253–257 (KMSKS) is the 'KMSKS' region element. Lys-256 is a binding site for ATP.

Belongs to the class-I aminoacyl-tRNA synthetase family. In terms of assembly, monomer. Zn(2+) is required as a cofactor.

The protein localises to the cytoplasm. It catalyses the reaction tRNA(Cys) + L-cysteine + ATP = L-cysteinyl-tRNA(Cys) + AMP + diphosphate. The polypeptide is Cysteine--tRNA ligase (cysS) (Mycoplasma genitalium (strain ATCC 33530 / DSM 19775 / NCTC 10195 / G37) (Mycoplasmoides genitalium)).